The primary structure comprises 162 residues: NAD(P)H-quinone oxidoreductase subunit N (162 aa).

It belongs to the complex I NdhN subunit family. NDH-1 can be composed of about 15 different subunits; different subcomplexes with different compositions have been identified which probably have different functions.

It localises to the cellular thylakoid membrane. The enzyme catalyses a plastoquinone + NADH + (n+1) H(+)(in) = a plastoquinol + NAD(+) + n H(+)(out). It carries out the reaction a plastoquinone + NADPH + (n+1) H(+)(in) = a plastoquinol + NADP(+) + n H(+)(out). Functionally, NDH-1 shuttles electrons from an unknown electron donor, via FMN and iron-sulfur (Fe-S) centers, to quinones in the respiratory and/or the photosynthetic chain. The immediate electron acceptor for the enzyme in this species is believed to be plastoquinone. Couples the redox reaction to proton translocation, and thus conserves the redox energy in a proton gradient. Cyanobacterial NDH-1 also plays a role in inorganic carbon-concentration. This chain is NAD(P)H-quinone oxidoreductase subunit N, found in Trichormus variabilis (strain ATCC 29413 / PCC 7937) (Anabaena variabilis).